The sequence spans 410 residues: Protein BTN2 (410 aa).

Disordered stretches follow at residues 223–264 and 276–410; these read INEP…TKED and MQEE…IEEI. Basic and acidic residues-rich tracts occupy residues 233–264 and 276–311; these read SKID…TKED and MQEE…KESL. The stretch at 243–330 forms a coiled coil; it reads NMSESLKEEE…QQKKLQNSKS (88 aa). Residues 334 to 362 are compositionally biased toward low complexity; it reads SEIEASNKNNNSNSGSAESDNESINSDSD. Over residues 364–373 the composition is skewed to polar residues; it reads TLDFSVSGNT.

Interacts with RHB1, IST2, TDA3 and YIF1.

Its subcellular location is the cytoplasm. It localises to the late endosome. Its function is as follows. V-SNARE binding protein that facilitates specific protein retrieval from a late endosome to the Golgi. Modulates the rate of arginine uptake. Involved in pH homeostasis. Required for the correct localization of IST2. May be involved in ion homeostasis together with IST2. The chain is Protein BTN2 (BTN2) from Saccharomyces cerevisiae (strain ATCC 204508 / S288c) (Baker's yeast).